Reading from the N-terminus, the 206-residue chain is Small ribosomal subunit protein uS4 (206 aa).

In terms of domain architecture, S4 RNA-binding spans 96 to 160; the sequence is CRLDNVVYRM…AQLRIVQALE (65 aa).

This sequence belongs to the universal ribosomal protein uS4 family. In terms of assembly, part of the 30S ribosomal subunit. Contacts protein S5. The interaction surface between S4 and S5 is involved in control of translational fidelity.

Its function is as follows. One of the primary rRNA binding proteins, it binds directly to 16S rRNA where it nucleates assembly of the body of the 30S subunit. With S5 and S12 plays an important role in translational accuracy. This is Small ribosomal subunit protein uS4 from Pseudomonas putida (strain GB-1).